A 271-amino-acid chain; its full sequence is 3-methyl-2-oxobutanoate hydroxymethyltransferase (271 aa).

Mg(2+)-binding residues include Asp-49 and Asp-88. 3-methyl-2-oxobutanoate contacts are provided by residues 49–50 (DS), Asp-88, and Lys-118. Glu-120 lines the Mg(2+) pocket. Glu-187 (proton acceptor) is an active-site residue.

The protein belongs to the PanB family. Homodecamer; pentamer of dimers. Mg(2+) serves as cofactor.

Its subcellular location is the cytoplasm. The enzyme catalyses 3-methyl-2-oxobutanoate + (6R)-5,10-methylene-5,6,7,8-tetrahydrofolate + H2O = 2-dehydropantoate + (6S)-5,6,7,8-tetrahydrofolate. It functions in the pathway cofactor biosynthesis; (R)-pantothenate biosynthesis; (R)-pantoate from 3-methyl-2-oxobutanoate: step 1/2. Functionally, catalyzes the reversible reaction in which hydroxymethyl group from 5,10-methylenetetrahydrofolate is transferred onto alpha-ketoisovalerate to form ketopantoate. This is 3-methyl-2-oxobutanoate hydroxymethyltransferase from Bartonella tribocorum (strain CIP 105476 / IBS 506).